The following is a 233-amino-acid chain: Protein AC81 (233 aa).

2 helical membrane-spanning segments follow: residues 171 to 191 (SFQTVLLTCAILLLLFNVEKF) and 194 to 214 (INLLIILLILLSLFCHNNYII).

The protein resides in the host nucleus. It localises to the host membrane. It is found in the virion. Plays an essential role in the assembly of nucleocapsids with envelopes. The polypeptide is Protein AC81 (AC81) (Autographa californica nuclear polyhedrosis virus (AcMNPV)).